Reading from the N-terminus, the 59-residue chain is Large ribosomal subunit protein bL32 (59 aa).

The protein belongs to the bacterial ribosomal protein bL32 family.

The chain is Large ribosomal subunit protein bL32 from Rhizorhabdus wittichii (strain DSM 6014 / CCUG 31198 / JCM 15750 / NBRC 105917 / EY 4224 / RW1) (Sphingomonas wittichii).